The following is a 363-amino-acid chain: Protein-arginine kinase (363 aa).

A Phosphagen kinase C-terminal domain is found at isoleucine 24–alanine 255. ATP-binding positions include serine 27 to arginine 31, histidine 92, arginine 126, arginine 177 to methionine 181, and arginine 208 to glutamate 213. The RDXXRA motif of the pArg binding pocket involved in allosteric regulation signature appears at arginine 338–alanine 343.

The protein belongs to the ATP:guanido phosphotransferase family. Homodimer. Dimerization is important for full catalytic activity.

The catalysed reaction is L-arginyl-[protein] + ATP = N(omega)-phospho-L-arginyl-[protein] + ADP + H(+). Appears to be allosterically activated by the binding of pArg-containing polypeptides to the pArg-binding pocket localized in the C-terminal domain of McsB. In terms of biological role, catalyzes the specific phosphorylation of arginine residues in a large number of proteins. Is part of the bacterial stress response system, where it is involved in regulating the global heat shock repressor CtsR; phosphorylates arginine residues in the winged helix-turn-helix domain of CtsR, thereby preventing its binding to DNA and consequently inducing the expression of repressed genes. Protein arginine phosphorylation has a physiologically important role and is involved in the regulation of many critical cellular processes, such as protein homeostasis, motility, competence, and stringent and stress responses, by regulating gene expression and protein activity. Acts exclusively on Arg residues, since it cannot phosphorylate Tyr, Ser, Thr, His, Asp and Lys. Has no free arginine kinase activity. The chain is Protein-arginine kinase from Geobacillus stearothermophilus (Bacillus stearothermophilus).